Reading from the N-terminus, the 285-residue chain is Single myb histone 3 (285 aa).

The disordered stretch occupies residues methionine 1–proline 35. The HTH myb-type domain occupies methionine 1–alanine 60. Positions tryptophan 28 to leucine 56 form a DNA-binding region, H-T-H motif. The region spanning threonine 113 to aspartate 181 is the H15 domain. Positions valine 226 to threonine 255 form a coiled coil.

It belongs to the histone H1/H5 family. SMH subfamily. In terms of assembly, forms a homodimer and heterodimers.

Its subcellular location is the nucleus. It localises to the chromosome. It is found in the nucleolus. The protein resides in the telomere. Its function is as follows. Binds preferentially double-stranded telomeric repeats, but may also bind to the single telomeric strand. This Zea mays (Maize) protein is Single myb histone 3 (SMH3).